The sequence spans 447 residues: Tubulin beta chain (447 aa).

Residues Gln-11, Glu-69, Ser-138, Gly-142, Thr-143, Gly-144, Asn-204, and Asn-226 each contribute to the GTP site. Position 69 (Glu-69) interacts with Mg(2+). The segment at 427-447 (DAGIDEEEEEYEEELPLEGEE) is disordered. A compositionally biased stretch (acidic residues) spans 429–447 (GIDEEEEEYEEELPLEGEE).

The protein belongs to the tubulin family. As to quaternary structure, dimer of alpha and beta chains. A typical microtubule is a hollow water-filled tube with an outer diameter of 25 nm and an inner diameter of 15 nM. Alpha-beta heterodimers associate head-to-tail to form protofilaments running lengthwise along the microtubule wall with the beta-tubulin subunit facing the microtubule plus end conferring a structural polarity. Microtubules usually have 13 protofilaments but different protofilament numbers can be found in some organisms and specialized cells. It depends on Mg(2+) as a cofactor.

Its subcellular location is the cytoplasm. The protein resides in the cytoskeleton. In terms of biological role, tubulin is the major constituent of microtubules, a cylinder consisting of laterally associated linear protofilaments composed of alpha- and beta-tubulin heterodimers. Microtubules grow by the addition of GTP-tubulin dimers to the microtubule end, where a stabilizing cap forms. Below the cap, tubulin dimers are in GDP-bound state, owing to GTPase activity of alpha-tubulin. The sequence is that of Tubulin beta chain (TUB2) from Hapsidospora chrysogena (Acremonium chrysogenum).